The sequence spans 304 residues: Mycothiol acetyltransferase (304 aa).

2 N-acetyltransferase domains span residues 16–155 (AHVE…RTGL) and 164–304 (VALS…YRRA). Glu-46 lines the 1D-myo-inositol 2-(L-cysteinylamino)-2-deoxy-alpha-D-glucopyranoside pocket. 87 to 89 (LVV) is an acetyl-CoA binding site. Residues Glu-190, Lys-230, and Glu-237 each contribute to the 1D-myo-inositol 2-(L-cysteinylamino)-2-deoxy-alpha-D-glucopyranoside site. Residues 241–243 (LGV) and 248–254 (AARGLGS) each bind acetyl-CoA. 1D-myo-inositol 2-(L-cysteinylamino)-2-deoxy-alpha-D-glucopyranoside is bound at residue Tyr-275.

This sequence belongs to the acetyltransferase family. MshD subfamily. Monomer.

It catalyses the reaction 1D-myo-inositol 2-(L-cysteinylamino)-2-deoxy-alpha-D-glucopyranoside + acetyl-CoA = mycothiol + CoA + H(+). Its function is as follows. Catalyzes the transfer of acetyl from acetyl-CoA to desacetylmycothiol (Cys-GlcN-Ins) to form mycothiol. The chain is Mycothiol acetyltransferase from Clavibacter sepedonicus (Clavibacter michiganensis subsp. sepedonicus).